A 186-amino-acid polypeptide reads, in one-letter code: dCTP deaminase (186 aa).

Residue 107-112 coordinates dCTP; that stretch reads KSSYAR. Glu133 acts as the Proton donor/acceptor in catalysis. Residues Gln152, Tyr166, and Gln176 each coordinate dCTP.

This sequence belongs to the dCTP deaminase family. Homotrimer.

It carries out the reaction dCTP + H2O + H(+) = dUTP + NH4(+). Its pathway is pyrimidine metabolism; dUMP biosynthesis; dUMP from dCTP (dUTP route): step 1/2. Functionally, catalyzes the deamination of dCTP to dUTP. The protein is dCTP deaminase of Chloroflexus aggregans (strain MD-66 / DSM 9485).